Here is a 60-residue protein sequence, read N- to C-terminus: Large ribosomal subunit protein bL32B (60 aa).

The segment covering 1 to 19 (MAVPKRKMSRANTRHRRSQ) has biased composition (basic residues). Positions 1 to 20 (MAVPKRKMSRANTRHRRSQW) are disordered.

This sequence belongs to the bacterial ribosomal protein bL32 family.

The sequence is that of Large ribosomal subunit protein bL32B from Saccharopolyspora erythraea (strain ATCC 11635 / DSM 40517 / JCM 4748 / NBRC 13426 / NCIMB 8594 / NRRL 2338).